We begin with the raw amino-acid sequence, 431 residues long: Adenylosuccinate synthetase (431 aa).

GTP is bound by residues 13–19 (GDEGKGK) and 41–43 (GHT). The active-site Proton acceptor is the Asp14. The Mg(2+) site is built by Asp14 and Gly41. IMP contacts are provided by residues 14-17 (DEGK), 39-42 (NAGH), Thr130, Arg144, Gln225, Thr240, and Arg304. The active-site Proton donor is His42. Residue 300 to 306 (SVTGRPR) coordinates substrate. GTP-binding positions include Arg306, 332 to 334 (KLD), and 414 to 416 (STG).

This sequence belongs to the adenylosuccinate synthetase family. In terms of assembly, homodimer. Mg(2+) serves as cofactor.

It localises to the cytoplasm. The enzyme catalyses IMP + L-aspartate + GTP = N(6)-(1,2-dicarboxyethyl)-AMP + GDP + phosphate + 2 H(+). Its pathway is purine metabolism; AMP biosynthesis via de novo pathway; AMP from IMP: step 1/2. In terms of biological role, plays an important role in the de novo pathway of purine nucleotide biosynthesis. Catalyzes the first committed step in the biosynthesis of AMP from IMP. This chain is Adenylosuccinate synthetase, found in Bordetella avium (strain 197N).